The following is a 191-amino-acid chain: Peptidyl-tRNA hydrolase (191 aa).

Y17 serves as a coordination point for tRNA. The active-site Proton acceptor is the H22. Residues Y68, N70, and N116 each contribute to the tRNA site.

It belongs to the PTH family. As to quaternary structure, monomer.

It is found in the cytoplasm. It catalyses the reaction an N-acyl-L-alpha-aminoacyl-tRNA + H2O = an N-acyl-L-amino acid + a tRNA + H(+). Its function is as follows. Hydrolyzes ribosome-free peptidyl-tRNAs (with 1 or more amino acids incorporated), which drop off the ribosome during protein synthesis, or as a result of ribosome stalling. Functionally, catalyzes the release of premature peptidyl moieties from peptidyl-tRNA molecules trapped in stalled 50S ribosomal subunits, and thus maintains levels of free tRNAs and 50S ribosomes. This Francisella tularensis subsp. holarctica (strain FTNF002-00 / FTA) protein is Peptidyl-tRNA hydrolase.